Here is a 205-residue protein sequence, read N- to C-terminus: E3 ubiquitin-protein ligase complex slx8-rfp subunit rfp2 (205 aa).

The segment at 147–190 adopts an RING-type; degenerate zinc-finger fold; the sequence is CAKCGNELVSDEKKSIFAAKCGHLFCSTCAKELRKKTVPCPVQH.

As to quaternary structure, part of an E3 ubiquitin complex including rfp1, rfp2 and slx8. Interacts with slx8.

The protein localises to the nucleus. The enzyme catalyses S-ubiquitinyl-[E2 ubiquitin-conjugating enzyme]-L-cysteine + [acceptor protein]-L-lysine = [E2 ubiquitin-conjugating enzyme]-L-cysteine + N(6)-ubiquitinyl-[acceptor protein]-L-lysine.. Its pathway is protein modification; protein ubiquitination. Functionally, mediates ubiquitination and subsequent desumoylation/degradation of sumoylated proteins and proteins containing SUMO-like domains. Involved in maintaining genome stability where it acts in the cellular response to DNA damage. In Schizosaccharomyces pombe (strain 972 / ATCC 24843) (Fission yeast), this protein is E3 ubiquitin-protein ligase complex slx8-rfp subunit rfp2 (rfp2).